A 64-amino-acid chain; its full sequence is DNA gyrase inhibitor YacG (64 aa).

Positions 7, 10, 26, and 30 each coordinate Zn(2+). Residues 44-64 form a disordered region; sequence RIPGEIDPELLPYPEEGEQWQ.

This sequence belongs to the DNA gyrase inhibitor YacG family. In terms of assembly, interacts with GyrB. Zn(2+) serves as cofactor.

In terms of biological role, inhibits all the catalytic activities of DNA gyrase by preventing its interaction with DNA. Acts by binding directly to the C-terminal domain of GyrB, which probably disrupts DNA binding by the gyrase. The protein is DNA gyrase inhibitor YacG of Aeromonas hydrophila subsp. hydrophila (strain ATCC 7966 / DSM 30187 / BCRC 13018 / CCUG 14551 / JCM 1027 / KCTC 2358 / NCIMB 9240 / NCTC 8049).